A 275-amino-acid polypeptide reads, in one-letter code: Large ribosomal subunit protein uL2 (275 aa).

A disordered region spans residues Ala-224–Gly-275.

Belongs to the universal ribosomal protein uL2 family. Part of the 50S ribosomal subunit. Forms a bridge to the 30S subunit in the 70S ribosome.

Functionally, one of the primary rRNA binding proteins. Required for association of the 30S and 50S subunits to form the 70S ribosome, for tRNA binding and peptide bond formation. It has been suggested to have peptidyltransferase activity; this is somewhat controversial. Makes several contacts with the 16S rRNA in the 70S ribosome. The sequence is that of Large ribosomal subunit protein uL2 from Xanthomonas oryzae pv. oryzae (strain MAFF 311018).